A 360-amino-acid polypeptide reads, in one-letter code: Phenylalanine--tRNA ligase alpha subunit (360 aa).

Glu-260 provides a ligand contact to Mg(2+).

The protein belongs to the class-II aminoacyl-tRNA synthetase family. Phe-tRNA synthetase alpha subunit type 1 subfamily. Tetramer of two alpha and two beta subunits. Mg(2+) serves as cofactor.

The protein resides in the cytoplasm. It carries out the reaction tRNA(Phe) + L-phenylalanine + ATP = L-phenylalanyl-tRNA(Phe) + AMP + diphosphate + H(+). This is Phenylalanine--tRNA ligase alpha subunit from Agrobacterium fabrum (strain C58 / ATCC 33970) (Agrobacterium tumefaciens (strain C58)).